We begin with the raw amino-acid sequence, 392 residues long: RNA-binding protein 42 (392 aa).

An RRM domain is found at 293–371; the sequence is FRIFCGDLGN…RPIKLRKSQW (79 aa). The tract at residues 372 to 392 is disordered; it reads KDRNMDVVRKKQREKKKLGLR. Residues 381–392 show a composition bias toward basic residues; it reads KKQREKKKLGLR.

Belongs to the RRM RBM42 family.

The protein resides in the nucleus. It localises to the cytoplasm. May bind RNA. The protein is RNA-binding protein 42 (rbm42) of Xenopus tropicalis (Western clawed frog).